Consider the following 2588-residue polypeptide: Histone-lysine N-methyltransferase, H3 lysine-36 specific (2588 aa).

Phosphoserine occurs at positions 110 and 118. 2 disordered regions span residues 209–264 (GSEQ…LGDT) and 277–307 (LSFQ…TSQE). Over residues 235-249 (EKQKNKQRSEVDGSN) the composition is skewed to basic and acidic residues. The span at 298-307 (GTSSPSTSQE) shows a compositional bias: polar residues. A phosphoserine mark is found at Ser-380 and Ser-383. A disordered region spans residues 383–403 (SADEKEKPCAKSRVRKSSDNI). Lys-802 is covalently cross-linked (Glycyl lysine isopeptide (Lys-Gly) (interchain with G-Cter in SUMO2)). Disordered regions lie at residues 830–899 (ASYR…SDKR), 947–987 (ERKR…PGKE), and 1008–1133 (FDSK…PRLN). Polar residues predominate over residues 855-874 (GSSTPNSEKPGDSTQDSVHQ). Residues 881 to 895 (SALSGELSSSLSSLA) show a composition bias toward low complexity. Basic and acidic residues predominate over residues 1008-1033 (FDSKAKQSDPDKNLEKEPSFENRKGP). A compositionally biased stretch (basic residues) spans 1054 to 1073 (PKKRWQRLNQRRPKPGKRAN). Lys-1237 is covalently cross-linked (Glycyl lysine isopeptide (Lys-Gly) (interchain with G-Cter in SUMO2)). Residues 1279 to 1324 (ASPRPALESEELLVKTPGNYESKRQRKPTKKLLESNDLDPGFMPKK) are disordered. Phosphoserine is present on Ser-1408. PHD-type zinc fingers lie at residues 1441-1487 (ENVC…CHTG), 1488-1544 (IHTC…CHAA), and 1605-1649 (VSWC…CKAG). Positions 1654-1716 (YREIVWVKVG…QARVFPYMEG (63 aa)) constitute a PWWP domain. The AWS domain occupies 1788-1838 (SEIPRCNCKATDENPCGIDSECINRMLLYECHPTVCPAGVRCQNQCFSKRQ). The 118-residue stretch at 1840–1957 (PDVEIFRTLQ…AGTELTFNYN (118 aa)) folds into the SET domain. S-adenosyl-L-methionine contacts are provided by residues 1850-1852 (RGW), 1892-1895 (TNFY), 1918-1919 (NH), Asn-1963, and Lys-1969. Residues 1958-1964 (LECLGNG) are inhibits enzyme activity in the absence of bound histone. The Post-SET domain maps to 1964–1980 (GKTVCKCGAPNCSGFLG). Residues 1989 to 2010 (VTEEKSRKFKRKPHGKRRSQGE) are disordered. Positions 1995-2006 (RKFKRKPHGKRR) are enriched in basic residues. The PHD-type 4; atypical zinc-finger motif lies at 2016–2063 (EDECFSCGDAGQLVSCKKPGCPKVYHADCLNLTKRPAGKWECPWHQCD). 4 disordered regions span residues 2105 to 2320 (PCGP…PPPE), 2333 to 2423 (KEKA…PSEH), 2447 to 2521 (YESA…WGLG), and 2560 to 2588 (RGQD…SEKK). Residues 2179–2196 (RPPERTDSSSHLLDRIRD) show a composition bias toward basic and acidic residues. Residues 2201 to 2212 (GTKSQSLVSSQR) show a composition bias toward polar residues. The segment covering 2213–2223 (PQDRPPAKEGP) has biased composition (basic and acidic residues). Residues 2232-2249 (SPMTRPSSSPSVSSLPLE) show a composition bias toward low complexity. Residues 2250–2261 (RPLRMTDSRLDK) are compositionally biased toward basic and acidic residues. Residue Ser-2267 is modified to Phosphoserine. Position 2360 is a phosphothreonine (Thr-2360). Ser-2369 carries the phosphoserine modification. Lys-2509 participates in a covalent cross-link: Glycyl lysine isopeptide (Lys-Gly) (interchain with G-Cter in SUMO2).

The protein belongs to the class V-like SAM-binding methyltransferase superfamily. In terms of assembly, interacts with AR DNA- and ligand-binding domains. Interacts with the ligand-binding domains of RARA and THRA in the absence of ligand; in the presence of ligand the interaction is severely disrupted but some binding still occurs. Interacts with the ligand-binding domains of RXRA and ESRRA only in the presence of ligand. Interacts with ZNF496. As to expression, expressed in the embryo and the outer region of the uterine decidua at early post-implantation 5.5 dpc stage. Uniformly expressed in embryonic and extraembryonic tissues during gastrulation stage 7.5 dpc. Expressed differentially after stage 14.5 dpc with highest expression in proliferating cells. Enriched in the telencephalic region of the brain, spinal cord, intestinal crypt, tooth buds, thymus and salivary glands at stage 16.5 dpc. Also expressed in the ossification region of developing bones and in the periosteum.

The protein resides in the nucleus. The protein localises to the chromosome. It catalyses the reaction L-lysyl(36)-[histone H3] + 2 S-adenosyl-L-methionine = N(6),N(6)-dimethyl-L-lysyl(36)-[histone H3] + 2 S-adenosyl-L-homocysteine + 2 H(+). Its function is as follows. Histone methyltransferase that dimethylates Lys-36 of histone H3 (H3K36me2). Transcriptional intermediary factor capable of negatively influencing transcription. May also positively influence transcription. Essential for early post-implantation development. The polypeptide is Histone-lysine N-methyltransferase, H3 lysine-36 specific (Mus musculus (Mouse)).